The sequence spans 355 residues: MNELKNDRYLRALLRQPVDMTPVWMMRQAGRYLPEYKATRAIAGDFMSLCKNAELACEVTMQPLRRYPLDAAILFSDILTIPDAMGLGLYFETGEGPRFQSPITCRADVEKLPIPDPEQELGYVMNAVRTIRRELAGSVPLIGFSGSPWTLATYMVEGGSSKAFTKLKKMMYAEPQTLHLLLDKLADSVILYLNAQIKAGAQSVMIFDTWGGVLTGRDYHEFSLNYMHKIVDGLIRENEGRRVPVTLFTKGGGPWLEAMAATGCDALGLDWTTDIADARRRVGDKVALQGNMDPSVLYAPPARIEQEVSTILASFGQGEGHVFNLGHGIHQDVPPAHAGAFVNAVHALSRPYHQK.

Substrate-binding positions include 27–31 (RQAGR), D77, Y154, T209, and H327.

Belongs to the uroporphyrinogen decarboxylase family. In terms of assembly, homodimer.

It localises to the cytoplasm. It carries out the reaction uroporphyrinogen III + 4 H(+) = coproporphyrinogen III + 4 CO2. Its pathway is porphyrin-containing compound metabolism; protoporphyrin-IX biosynthesis; coproporphyrinogen-III from 5-aminolevulinate: step 4/4. Catalyzes the decarboxylation of four acetate groups of uroporphyrinogen-III to yield coproporphyrinogen-III. The chain is Uroporphyrinogen decarboxylase from Yersinia pestis bv. Antiqua (strain Antiqua).